The sequence spans 297 residues: tRNA dimethylallyltransferase (297 aa).

9 to 16 (GPTASGKS) is an ATP binding site. 11-16 (TASGKS) lines the substrate pocket. Interaction with substrate tRNA regions lie at residues 34 to 37 (DSMQ) and 155 to 159 (QRVIR).

This sequence belongs to the IPP transferase family. In terms of assembly, monomer. It depends on Mg(2+) as a cofactor.

It carries out the reaction adenosine(37) in tRNA + dimethylallyl diphosphate = N(6)-dimethylallyladenosine(37) in tRNA + diphosphate. In terms of biological role, catalyzes the transfer of a dimethylallyl group onto the adenine at position 37 in tRNAs that read codons beginning with uridine, leading to the formation of N6-(dimethylallyl)adenosine (i(6)A). The polypeptide is tRNA dimethylallyltransferase (Leuconostoc mesenteroides subsp. mesenteroides (strain ATCC 8293 / DSM 20343 / BCRC 11652 / CCM 1803 / JCM 6124 / NCDO 523 / NBRC 100496 / NCIMB 8023 / NCTC 12954 / NRRL B-1118 / 37Y)).